Reading from the N-terminus, the 434-residue chain is Phosphomethylpyrimidine synthase 2 (434 aa).

Substrate-binding positions include methionine 94, tyrosine 123, histidine 162, serine 184 to glycine 186, asparagine 225 to arginine 228, and glutamate 264. Residue histidine 268 coordinates Zn(2+). Tyrosine 291 provides a ligand contact to substrate. Histidine 332 is a binding site for Zn(2+). Residues cysteine 408, cysteine 411, and cysteine 415 each coordinate [4Fe-4S] cluster.

It belongs to the ThiC family. The cofactor is [4Fe-4S] cluster.

The catalysed reaction is 5-amino-1-(5-phospho-beta-D-ribosyl)imidazole + S-adenosyl-L-methionine = 4-amino-2-methyl-5-(phosphooxymethyl)pyrimidine + CO + 5'-deoxyadenosine + formate + L-methionine + 3 H(+). It functions in the pathway cofactor biosynthesis; thiamine diphosphate biosynthesis. Catalyzes the synthesis of the hydroxymethylpyrimidine phosphate (HMP-P) moiety of thiamine from aminoimidazole ribotide (AIR) in a radical S-adenosyl-L-methionine (SAM)-dependent reaction. In Methanosphaera stadtmanae (strain ATCC 43021 / DSM 3091 / JCM 11832 / MCB-3), this protein is Phosphomethylpyrimidine synthase 2.